A 252-amino-acid polypeptide reads, in one-letter code: Ribosomal RNA small subunit methyltransferase A (252 aa).

S-adenosyl-L-methionine-binding residues include Asn10, Leu12, Gly36, Glu57, Asp81, and Asn98.

This sequence belongs to the class I-like SAM-binding methyltransferase superfamily. rRNA adenine N(6)-methyltransferase family. RsmA subfamily.

The protein resides in the cytoplasm. The catalysed reaction is adenosine(1518)/adenosine(1519) in 16S rRNA + 4 S-adenosyl-L-methionine = N(6)-dimethyladenosine(1518)/N(6)-dimethyladenosine(1519) in 16S rRNA + 4 S-adenosyl-L-homocysteine + 4 H(+). In terms of biological role, specifically dimethylates two adjacent adenosines (A1518 and A1519) in the loop of a conserved hairpin near the 3'-end of 16S rRNA in the 30S particle. May play a critical role in biogenesis of 30S subunits. The sequence is that of Ribosomal RNA small subunit methyltransferase A from Mycoplasmopsis pulmonis (strain UAB CTIP) (Mycoplasma pulmonis).